The sequence spans 69 residues: Ubiquitin-ribosomal protein eL40 fusion protein (69 aa).

The Ubiquitin-like domain occupies 1-17; it reads NIQKESTLHLVLRLRGG. Residue Lys-4 forms a Glycyl lysine isopeptide (Lys-Gly) (interchain with G-Cter in ubiquitin) linkage. Residue Gly-17 forms a Glycyl lysine isopeptide (Gly-Lys) (interchain with K-? in acceptor proteins) linkage. An N6,N6,N6-trimethyllysine modification is found at Lys-39.

It in the N-terminal section; belongs to the ubiquitin family. In the C-terminal section; belongs to the eukaryotic ribosomal protein eL40 family. Part of the 60S ribosomal subunit. In terms of processing, trimethylation of Lys-39 ('Lys-22' of the mature chain) by SMYD5 promotes translation elongation and protein synthesis.

It is found in the cytoplasm. It localises to the nucleus. Functionally, exists either covalently attached to another protein, or free (unanchored). When covalently bound, it is conjugated to target proteins via an isopeptide bond either as a monomer (monoubiquitin), a polymer linked via different Lys residues of the ubiquitin (polyubiquitin chains) or a linear polymer linked via the initiator Met of the ubiquitin (linear polyubiquitin chains). Polyubiquitin chains, when attached to a target protein, have different functions depending on the Lys residue of the ubiquitin that is linked: Lys-6-linked may be involved in DNA repair; Lys-11-linked is involved in ERAD (endoplasmic reticulum-associated degradation) and in cell-cycle regulation; Lys-29-linked is involved in proteotoxic stress response and cell cycle; Lys-33-linked is involved in kinase modification; Lys-48-linked is involved in protein degradation via the proteasome; Lys-63-linked is involved in endocytosis, DNA-damage responses as well as in signaling processes leading to activation of the transcription factor NF-kappa-B. Linear polymer chains formed via attachment by the initiator Met lead to cell signaling. Ubiquitin is usually conjugated to Lys residues of target proteins, however, in rare cases, conjugation to Cys or Ser residues has been observed. When polyubiquitin is free (unanchored-polyubiquitin), it also has distinct roles, such as in activation of protein kinases, and in signaling. Its function is as follows. Component of the 60S subunit of the ribosome. The protein is Ubiquitin-ribosomal protein eL40 fusion protein (UBA52) of Gallus gallus (Chicken).